Consider the following 300-residue polypeptide: Protoheme IX farnesyltransferase (300 aa).

9 helical membrane passes run 24–44 (VTQL…PGMV), 48–68 (VLLG…AINC), 94–114 (LQIL…LYTF), 118–138 (LTIW…TLLL), 146–166 (IVIG…AVTG), 172–192 (AWIL…VLAL), 217–237 (LHIL…FISG), 239–259 (SGAV…AYAW), and 278–298 (IVYL…RPVI).

Belongs to the UbiA prenyltransferase family. Protoheme IX farnesyltransferase subfamily.

The protein resides in the cell inner membrane. It catalyses the reaction heme b + (2E,6E)-farnesyl diphosphate + H2O = Fe(II)-heme o + diphosphate. It functions in the pathway porphyrin-containing compound metabolism; heme O biosynthesis; heme O from protoheme: step 1/1. In terms of biological role, converts heme B (protoheme IX) to heme O by substitution of the vinyl group on carbon 2 of heme B porphyrin ring with a hydroxyethyl farnesyl side group. This Burkholderia mallei (strain NCTC 10247) protein is Protoheme IX farnesyltransferase.